The primary structure comprises 410 residues: Trifunctional NAD biosynthesis/regulator protein NadR (410 aa).

Positions 7–62 (LKTAIKQQGCTLQQVADASGMTKGYLSQLLNAKIKSPSAQKLEALHRFLGLEFPRR) constitute an HTH cro/C1-type domain. Residues 18-37 (LQQVADASGMTKGYLSQLLN) constitute a DNA-binding region (H-T-H motif). Residues 63–229 (QKNIGVVFGK…EYIPTEVKPF (167 aa)) are nicotinamide mononucleotide adenylyltransferase. Residues 70–73 (FGKF), H77, R104, 144–157 (EEGM…WDVW), 177–179 (TSE), 204–206 (MNI), 259–261 (SAW), and 294–297 (YIDF) each bind NAD(+). Positions 230–410 (FVRTVAILGG…LVKEMMGEQG (181 aa)) are ribosylnicotinamide kinase.

The protein in the central section; belongs to the bacterial NMN adenylyltransferase family. It in the C-terminal section; belongs to the bacterial RNK family. As to quaternary structure, homotetramer.

Its subcellular location is the cell membrane. It is found in the cytoplasm. The catalysed reaction is beta-nicotinamide D-ribonucleotide + ATP + H(+) = diphosphate + NAD(+). It carries out the reaction beta-nicotinamide D-riboside + ATP = beta-nicotinamide D-ribonucleotide + ADP + H(+). Its pathway is cofactor biosynthesis; NAD(+) biosynthesis [regulation]. It participates in cofactor biosynthesis; NAD(+) biosynthesis; NAD(+) from nicotinamide D-ribonucleotide: step 1/1. Feed-back regulated by NAD. A high level of NAD causes NadR to lose enzymatic activity and repress several NAD synthetic genes; conversely, a low NAD level activates the assimilatory enzymatic activities and leads to derepression of biosynthetic genes. Its function is as follows. This enzyme has three activities: DNA binding, nicotinamide mononucleotide (NMN) adenylyltransferase and ribosylnicotinamide (RN) kinase. The DNA-binding domain binds to the nadB operator sequence in an NAD- and ATP-dependent manner. As NAD levels increase within the cell, the affinity of NadR for the nadB operator regions of nadA, nadB, and pncB increases, repressing the transcription of these genes. The RN kinase activity catalyzes the phosphorylation of RN to form nicotinamide ribonucleotide. The NMN adenylyltransferase activity catalyzes the transfer of the AMP moiety of ATP to nicotinamide ribonucleotide to form NAD(+). The NMN adenylyltransferase domain also functions as the NAD and ATP sensor. The polypeptide is Trifunctional NAD biosynthesis/regulator protein NadR (nadR) (Salmonella typhimurium (strain LT2 / SGSC1412 / ATCC 700720)).